The following is a 55-amino-acid chain: Large ribosomal subunit protein bL33 (55 aa).

The protein belongs to the bacterial ribosomal protein bL33 family.

The polypeptide is Large ribosomal subunit protein bL33 (Bordetella avium (strain 197N)).